Here is a 325-residue protein sequence, read N- to C-terminus: uncharacterized protein (325 aa).

A disordered region spans residues 37–85; sequence EKPTYTPAKPVKKAPSVVQPRRVSRTLRSSESVHTNHGPERVFESPTPA. A Phosphoserine modification is found at Ser52. A compositionally biased stretch (polar residues) spans 62–71; the sequence is TLRSSESVHT. In terms of domain architecture, FCP1 homology spans 153 to 311; that stretch reads EDEGKKCLIL…IDLIPFLEHL (159 aa).

This is an uncharacterized protein from Schizosaccharomyces pombe (strain 972 / ATCC 24843) (Fission yeast).